A 698-amino-acid polypeptide reads, in one-letter code: Polyribonucleotide nucleotidyltransferase (698 aa).

Positions 487 and 493 each coordinate Mg(2+). Residues 555 to 614 (PKIIQIQIDPQKIGDVVGQRGKTINAIIEQTGVKIDINDEGAVSVCGTDKDMMDKAINMI) enclose the KH domain. An S1 motif domain is found at 624–692 (GQVFEGKVIS…KMGRISFSIK (69 aa)).

This sequence belongs to the polyribonucleotide nucleotidyltransferase family. It depends on Mg(2+) as a cofactor.

It is found in the cytoplasm. It carries out the reaction RNA(n+1) + phosphate = RNA(n) + a ribonucleoside 5'-diphosphate. In terms of biological role, involved in mRNA degradation. Catalyzes the phosphorolysis of single-stranded polyribonucleotides processively in the 3'- to 5'-direction. This Lachnoclostridium phytofermentans (strain ATCC 700394 / DSM 18823 / ISDg) (Clostridium phytofermentans) protein is Polyribonucleotide nucleotidyltransferase.